The sequence spans 220 residues: Imidazoleglycerol-phosphate dehydratase (220 aa).

The protein belongs to the imidazoleglycerol-phosphate dehydratase family.

The enzyme catalyses D-erythro-1-(imidazol-4-yl)glycerol 3-phosphate = 3-(imidazol-4-yl)-2-oxopropyl phosphate + H2O. Its pathway is amino-acid biosynthesis; L-histidine biosynthesis; L-histidine from 5-phospho-alpha-D-ribose 1-diphosphate: step 6/9. This chain is Imidazoleglycerol-phosphate dehydratase (HIS3), found in Eremothecium gossypii (strain ATCC 10895 / CBS 109.51 / FGSC 9923 / NRRL Y-1056) (Yeast).